Here is a 2617-residue protein sequence, read N- to C-terminus: DNA-directed RNA polymerase subunit beta'' (2617 aa).

Zn(2+)-binding residues include Cys-263, Cys-334, Cys-341, and Cys-344.

Belongs to the RNA polymerase beta' chain family. RpoC2 subfamily. In plastids the minimal PEP RNA polymerase catalytic core is composed of four subunits: alpha, beta, beta', and beta''. When a (nuclear-encoded) sigma factor is associated with the core the holoenzyme is formed, which can initiate transcription. Zn(2+) serves as cofactor.

The protein localises to the plastid. The protein resides in the chloroplast. It carries out the reaction RNA(n) + a ribonucleoside 5'-triphosphate = RNA(n+1) + diphosphate. Functionally, DNA-dependent RNA polymerase catalyzes the transcription of DNA into RNA using the four ribonucleoside triphosphates as substrates. This is DNA-directed RNA polymerase subunit beta'' from Oedogonium cardiacum (Filamentous green alga).